Here is a 359-residue protein sequence, read N- to C-terminus: DNA integrity scanning protein DisA (359 aa).

The DAC domain occupies 7-145; that stretch reads DPTGRAVLRA…DGRRWVLEDS (139 aa). ATP-binding positions include Gly74, Leu92, and 105–109; that span reads TRHRT.

The protein belongs to the DisA family. In terms of assembly, homooctamer. Mg(2+) is required as a cofactor.

It carries out the reaction 2 ATP = 3',3'-c-di-AMP + 2 diphosphate. Functionally, participates in a DNA-damage check-point. DisA forms globular foci that rapidly scan along the chromosomes searching for lesions. Also has diadenylate cyclase activity, catalyzing the condensation of 2 ATP molecules into cyclic di-AMP (c-di-AMP). c-di-AMP likely acts as a signaling molecule that may couple DNA integrity with a cellular process. This is DNA integrity scanning protein DisA from Beutenbergia cavernae (strain ATCC BAA-8 / DSM 12333 / CCUG 43141 / JCM 11478 / NBRC 16432 / NCIMB 13614 / HKI 0122).